Here is a 395-residue protein sequence, read N- to C-terminus: WW domain-containing transcription regulator protein 1 (395 aa).

Lys-46 is covalently cross-linked (Glycyl lysine isopeptide (Lys-Gly) (interchain with G-Cter in ubiquitin)). A disordered region spans residues 52–116 (FFKEPDSGSH…AQQHAHLRQQ (65 aa)). Positions 61 to 70 (HSRQSSTDSS) are enriched in polar residues. Phosphoserine is present on Ser-62. Ser-89 bears the Phosphoserine; by LATS2 mark. Residues 124-157 (LPLPPGWEMTFTATGQRYFLNHIEKITTWQDPRK) form the WW domain. A required for interaction with PALS1 region spans residues 221–395 (PNALTTQQQQ…NKSEPFLTWL (175 aa)). Residues 224–258 (LTTQQQQQQKLRLQRIQMERERIRMRQEELMRQEA) are a coiled coil. Polar residues predominate over residues 277–293 (PAMSTDMRSVTNSSSDP). Residues 277–308 (PAMSTDMRSVTNSSSDPFLNGGPYHSREQSTD) form a disordered region. A Phosphoserine modification is found at Ser-290. Position 306 is a phosphoserine; by LATS2 (Ser-306). A PDZ-binding motif is present at residues 389-395 (EPFLTWL).

As to quaternary structure, binds to SLC9A3R2 via the PDZ motif at the plasma membrane. Binds to YWHAZ in vivo and in vitro through the phosphoserine-binding motif RSHSSP. Interacts (via coiled-coil domain) with SMAD2 (via MH1 domain), SMAD3 and SMAD4. Interacts with MED15. Interacts with PAX8 and NKX2-1. Interacts with TEAD1, TEAD2, TEAD3 and TEAD4. Interacts (via WW domain) with PALS1. Interacts with LATS1. Interacts with YAP1 (when phosphorylated at 'Ser-112'). Interacts (via WW domain) with PRRG4 (via cytoplasmic domain). Interacts (via WW domain) with AMOTL2 (via PPXY motif); the interaction promotes WWTR1/TAZ localization to the cytoplasm and tight junctions, thereby inhibiting its transcriptional coactivator properties. Interacts (via WW domain) with AMOT; the interaction facilitates translocation of WWTR1/TAZ to the cytoplasm. Post-translationally, phosphorylated by LATS2 and STK3/MST2. Phosphorylation by LATS2 results in creation of 14-3-3 binding sites, retention in the cytoplasm, and functional inactivation. Phosphorylation results in the inhibition of transcriptional coactivation through YWHAZ-mediated nuclear export. Ubiquitinated at Lys-46; leading to proteasomal degradation. Deubiquitinated and stabilized by UCHL1 at Lys-46; leading to inhibition of osteoclastogenesis. As to expression, highly expressed in kidney, heart, placenta and lung.

It localises to the nucleus. It is found in the cytoplasm. Its subcellular location is the cell membrane. The protein resides in the cell junction. The protein localises to the tight junction. Its function is as follows. Transcriptional coactivator which acts as a downstream regulatory target in the Hippo signaling pathway that plays a pivotal role in organ size control and tumor suppression by restricting proliferation and promoting apoptosis. The core of this pathway is composed of a kinase cascade wherein STK3/MST2 and STK4/MST1, in complex with its regulatory protein SAV1, phosphorylates and activates LATS1/2 in complex with its regulatory protein MOB1, which in turn phosphorylates and inactivates YAP1 oncoprotein and WWTR1/TAZ. WWTR1 enhances PAX8 and NKX2-1/TTF1-dependent gene activation. In conjunction with YAP1, involved in the regulation of TGFB1-dependent SMAD2 and SMAD3 nuclear accumulation. Plays a key role in coupling SMADs to the transcriptional machinery such as the mediator complex. Regulates embryonic stem-cell self-renewal, promotes cell proliferation and epithelial-mesenchymal transition. This is WW domain-containing transcription regulator protein 1 from Mus musculus (Mouse).